The chain runs to 115 residues: Large ribosomal subunit protein uL22 (115 aa).

The protein belongs to the universal ribosomal protein uL22 family. Part of the 50S ribosomal subunit.

Its function is as follows. This protein binds specifically to 23S rRNA; its binding is stimulated by other ribosomal proteins, e.g. L4, L17, and L20. It is important during the early stages of 50S assembly. It makes multiple contacts with different domains of the 23S rRNA in the assembled 50S subunit and ribosome. Functionally, the globular domain of the protein is located near the polypeptide exit tunnel on the outside of the subunit, while an extended beta-hairpin is found that lines the wall of the exit tunnel in the center of the 70S ribosome. The chain is Large ribosomal subunit protein uL22 from Enterococcus faecalis (strain ATCC 700802 / V583).